Here is a 298-residue protein sequence, read N- to C-terminus: Golgi to ER traffic protein 2 (298 aa).

Topologically, residues 1-164 are cytoplasmic; it reads MSEPVVDTAE…LEYNTYNQKL (164 aa). A disordered region spans residues 40 to 92; sequence ILSQGSSVKTSGVKSVLDQEKEATPSHDEDPEIQDITEITTPPPRTPPIGEDA. Low complexity predominate over residues 42–55; that stretch reads SQGSSVKTSGVKSV. A compositionally biased stretch (basic and acidic residues) spans 56–67; it reads LDQEKEATPSHD. The chain crosses the membrane as a helical span at residues 165–185; sequence WKFRFLLVRVSVTLFNFFYHY. At 186–211 the chain is on the lumenal side; that stretch reads INLSNFHASNYAYVRDLSSEKYPVRD. A helical transmembrane segment spans residues 212–231; it reads FFTWFATTEVVLVAAYYSIF. Residues 232–275 are Cytoplasmic-facing; the sequence is HSLGLFHAANQNSFVLKAMSMGSMVLPQLEHYKPLVARFLGYYE. A helical membrane pass occupies residues 276–296; that stretch reads LLGIVLGDLSLVIVLFGLLSF. The Lumenal portion of the chain corresponds to 297-298; sequence AN.

This sequence belongs to the GET2 family. As to quaternary structure, component of the Golgi to ER traffic (GET) complex, which is composed of GET1, GET2 and GET3. Within the complex, GET1 and GET2 form a heterotetramer which is stabilized by phosphatidylinositol binding and which binds to the GET3 homodimer.

It localises to the endoplasmic reticulum membrane. The protein localises to the golgi apparatus membrane. In terms of biological role, required for the post-translational delivery of tail-anchored (TA) proteins to the endoplasmic reticulum. Together with GET1, acts as a membrane receptor for soluble GET3, which recognizes and selectively binds the transmembrane domain of TA proteins in the cytosol. The GET complex cooperates with the HDEL receptor ERD2 to mediate the ATP-dependent retrieval of resident ER proteins that contain a C-terminal H-D-E-L retention signal from the Golgi to the ER. The sequence is that of Golgi to ER traffic protein 2 from Candida albicans (strain SC5314 / ATCC MYA-2876) (Yeast).